The primary structure comprises 393 residues: 1-deoxy-D-xylulose 5-phosphate reductoisomerase (393 aa).

Positions 10, 11, 12, 13, 38, and 124 each coordinate NADPH. Position 125 (lysine 125) interacts with 1-deoxy-D-xylulose 5-phosphate. An NADPH-binding site is contributed by glutamate 126. Aspartate 150 lines the Mn(2+) pocket. 4 residues coordinate 1-deoxy-D-xylulose 5-phosphate: serine 151, glutamate 152, serine 179, and histidine 202. Glutamate 152 is a Mn(2+) binding site. Glycine 208 contributes to the NADPH binding site. Residues serine 215, asparagine 220, lysine 221, and glutamate 224 each contribute to the 1-deoxy-D-xylulose 5-phosphate site. Residue glutamate 224 participates in Mn(2+) binding.

This sequence belongs to the DXR family. Mg(2+) is required as a cofactor. Requires Mn(2+) as cofactor.

The catalysed reaction is 2-C-methyl-D-erythritol 4-phosphate + NADP(+) = 1-deoxy-D-xylulose 5-phosphate + NADPH + H(+). It functions in the pathway isoprenoid biosynthesis; isopentenyl diphosphate biosynthesis via DXP pathway; isopentenyl diphosphate from 1-deoxy-D-xylulose 5-phosphate: step 1/6. Functionally, catalyzes the NADPH-dependent rearrangement and reduction of 1-deoxy-D-xylulose-5-phosphate (DXP) to 2-C-methyl-D-erythritol 4-phosphate (MEP). This is 1-deoxy-D-xylulose 5-phosphate reductoisomerase from Ralstonia nicotianae (strain ATCC BAA-1114 / GMI1000) (Ralstonia solanacearum).